The sequence spans 67 residues: Small ribosomal subunit protein eS27 (67 aa).

The Zn(2+) site is built by Cys-22, Cys-25, Cys-41, and Cys-44. The C4-type zinc finger occupies 22-44 (CPDCGNEQVVFSHAAMVVRCLVC).

It belongs to the eukaryotic ribosomal protein eS27 family. Part of the 30S ribosomal subunit. Zn(2+) serves as cofactor.

The chain is Small ribosomal subunit protein eS27 from Pyrobaculum islandicum (strain DSM 4184 / JCM 9189 / GEO3).